A 438-amino-acid chain; its full sequence is 2-(3-amino-3-carboxypropyl)histidine synthase subunit 1 (438 aa).

[4Fe-4S] cluster-binding residues include Cys110, Cys214, and Cys342. Position 418 is a phosphoserine (Ser418).

The protein belongs to the DPH1/DPH2 family. DPH1 subfamily. As to quaternary structure, component of the 2-(3-amino-3-carboxypropyl)histidine synthase complex composed of DPH1, DPH2, DPH3 and a NADH-dependent reductase. Interacts with DPH2 and RBM8A. The cofactor is [4Fe-4S] cluster.

The protein localises to the nucleus. It localises to the cytoplasm. It carries out the reaction L-histidyl-[translation elongation factor 2] + S-adenosyl-L-methionine = 2-[(3S)-amino-3-carboxypropyl]-L-histidyl-[translation elongation factor 2] + S-methyl-5'-thioadenosine + H(+). It participates in protein modification; peptidyl-diphthamide biosynthesis. Catalyzes the first step of diphthamide biosynthesis, a post-translational modification of histidine which occurs in elongation factor 2. DPH1 and DPH2 transfer a 3-amino-3-carboxypropyl (ACP) group from S-adenosyl-L-methionine (SAM) to a histidine residue, the reaction is assisted by a reduction system comprising DPH3 and a NADH-dependent reductase. The polypeptide is 2-(3-amino-3-carboxypropyl)histidine synthase subunit 1 (DPH1) (Bos taurus (Bovine)).